The sequence spans 105 residues: U2-lycotoxin-Ls1d (105 aa).

The N-terminal stretch at 1–17 (MIKYVLISALLVVAVYS) is a signal peptide. A propeptide spanning residues 18-41 (FTIEDNEDALLEEAEDELDTEEER) is cleaved from the precursor. 4 cysteine pairs are disulfide-bonded: C51/C67, C58/C97, C60/C83, and C69/C81.

It belongs to the neurotoxin 04 (omega-agtx) family. 01 (type I omega-agtx) subfamily. As to expression, expressed by the venom gland.

It localises to the secreted. In terms of biological role, insecticidal to house crickets. It induces an excitatory slow-onset impact that leads to irreversible spastic paralysis. It also modifies human voltage-gated potassium channel Kv1.5/KCNA5. Most likely, it binds to the voltage-sensing domain of the channel, suggesting it does not block the pore but prevents its opening at physiological membrane potentials. The recombinant peptide binds to the channel in an irreversible manner and slows down the hKv1.5 current activation kinetics. It is not toxic to mice, when intracranially injected (at 0.5 ug/g mouse). This chain is U2-lycotoxin-Ls1d, found in Lycosa singoriensis (Wolf spider).